Here is a 305-residue protein sequence, read N- to C-terminus: uncharacterized protein (305 aa).

3 consecutive transmembrane segments (helical) span residues 52-72, 89-109, and 120-140; these read TINLTSAIIILVVGMFISKII, IAGFLSALMRYIIITFTFIAA, and VIAILGAAGMAIGLALQGSLS.

This sequence belongs to the MscS (TC 1.A.23) family.

It localises to the cell membrane. This is an uncharacterized protein from Buchnera aphidicola subsp. Acyrthosiphon pisum (strain APS) (Acyrthosiphon pisum symbiotic bacterium).